The following is a 130-amino-acid chain: Aspartate 1-decarboxylase (130 aa).

S25 acts as the Schiff-base intermediate with substrate; via pyruvic acid in catalysis. S25 is subject to Pyruvic acid (Ser). T57 is a binding site for substrate. Y58 serves as the catalytic Proton donor. 73-75 (GAA) lines the substrate pocket.

It belongs to the PanD family. Heterooctamer of four alpha and four beta subunits. The cofactor is pyruvate. In terms of processing, is synthesized initially as an inactive proenzyme, which is activated by self-cleavage at a specific serine bond to produce a beta-subunit with a hydroxyl group at its C-terminus and an alpha-subunit with a pyruvoyl group at its N-terminus.

The protein resides in the cytoplasm. The catalysed reaction is L-aspartate + H(+) = beta-alanine + CO2. The protein operates within cofactor biosynthesis; (R)-pantothenate biosynthesis; beta-alanine from L-aspartate: step 1/1. Functionally, catalyzes the pyruvoyl-dependent decarboxylation of aspartate to produce beta-alanine. This Myxococcus xanthus (strain DK1622) protein is Aspartate 1-decarboxylase.